The following is a 125-amino-acid chain: uncharacterized protein (125 aa).

This sequence belongs to the asfivirus H124R family.

The protein resides in the virion. This is an uncharacterized protein from Ornithodoros (relapsing fever ticks).